Reading from the N-terminus, the 221-residue chain is UPF0758 protein NTHI1125 (221 aa).

The MPN domain maps to 98–221; the sequence is PIINDLETVK…CYSFAENCLL (124 aa). Residues H170, H172, and D183 each coordinate Zn(2+). Residues 170–183 carry the JAMM motif motif; it reads HNHPSGITEPSYSD.

It belongs to the UPF0758 family.

The polypeptide is UPF0758 protein NTHI1125 (Haemophilus influenzae (strain 86-028NP)).